The primary structure comprises 193 residues: Peptidyl-tRNA hydrolase (193 aa).

Tyr15 provides a ligand contact to tRNA. His20 functions as the Proton acceptor in the catalytic mechanism. TRNA-binding residues include Phe65, Asn67, and Asn113.

Belongs to the PTH family. In terms of assembly, monomer.

The protein localises to the cytoplasm. It carries out the reaction an N-acyl-L-alpha-aminoacyl-tRNA + H2O = an N-acyl-L-amino acid + a tRNA + H(+). In terms of biological role, hydrolyzes ribosome-free peptidyl-tRNAs (with 1 or more amino acids incorporated), which drop off the ribosome during protein synthesis, or as a result of ribosome stalling. Functionally, catalyzes the release of premature peptidyl moieties from peptidyl-tRNA molecules trapped in stalled 50S ribosomal subunits, and thus maintains levels of free tRNAs and 50S ribosomes. The chain is Peptidyl-tRNA hydrolase from Ehrlichia canis (strain Jake).